The sequence spans 231 residues: Orotate phosphoribosyltransferase (231 aa).

5-phospho-alpha-D-ribose 1-diphosphate contacts are provided by residues K27, 79-80, R106, K107, K110, H112, and 133-141; these read YK and DDVMTAGTA. 2 residues coordinate orotate: T137 and R166.

Belongs to the purine/pyrimidine phosphoribosyltransferase family. PyrE subfamily. Homodimer. Mg(2+) is required as a cofactor.

It carries out the reaction orotidine 5'-phosphate + diphosphate = orotate + 5-phospho-alpha-D-ribose 1-diphosphate. The protein operates within pyrimidine metabolism; UMP biosynthesis via de novo pathway; UMP from orotate: step 1/2. Catalyzes the transfer of a ribosyl phosphate group from 5-phosphoribose 1-diphosphate to orotate, leading to the formation of orotidine monophosphate (OMP). The polypeptide is Orotate phosphoribosyltransferase (Bifidobacterium animalis subsp. lactis (strain AD011)).